Here is a 272-residue protein sequence, read N- to C-terminus: Large ribosomal subunit protein uL29m (272 aa).

3 disordered regions span residues Met1–Gln29, Lys56–Lys87, and Ala227–Leu272. Residues Ser17 to Gln29 are compositionally biased toward low complexity. Low complexity-rich tracts occupy residues Ala227–Glu238 and Pro249–Thr259. Over residues Ile260 to Leu272 the composition is skewed to polar residues.

Belongs to the universal ribosomal protein uL29 family. Component of the mitochondrial large ribosomal subunit. Mature mitochondrial ribosomes consist of a small (37S) and a large (54S) subunit. The 37S subunit contains at least 33 different proteins and 1 molecule of RNA (15S). The 54S subunit contains at least 45 different proteins and 1 molecule of RNA (21S).

The protein localises to the mitochondrion. This chain is Large ribosomal subunit protein uL29m (MRPL4), found in Chaetomium globosum (strain ATCC 6205 / CBS 148.51 / DSM 1962 / NBRC 6347 / NRRL 1970) (Soil fungus).